Reading from the N-terminus, the 952-residue chain is Isoleucine--tRNA ligase (952 aa).

The 'HIGH' region motif lies at 58–68 (PYANGDIHIGH). Glutamate 576 is an L-isoleucyl-5'-AMP binding site. The 'KMSKS' region signature appears at 617-621 (KMSKS). ATP is bound at residue lysine 620. The Zn(2+) site is built by cysteine 915, cysteine 918, cysteine 935, and cysteine 938.

This sequence belongs to the class-I aminoacyl-tRNA synthetase family. IleS type 1 subfamily. In terms of assembly, monomer. Requires Zn(2+) as cofactor.

It is found in the cytoplasm. The catalysed reaction is tRNA(Ile) + L-isoleucine + ATP = L-isoleucyl-tRNA(Ile) + AMP + diphosphate. Its function is as follows. Catalyzes the attachment of isoleucine to tRNA(Ile). As IleRS can inadvertently accommodate and process structurally similar amino acids such as valine, to avoid such errors it has two additional distinct tRNA(Ile)-dependent editing activities. One activity is designated as 'pretransfer' editing and involves the hydrolysis of activated Val-AMP. The other activity is designated 'posttransfer' editing and involves deacylation of mischarged Val-tRNA(Ile). This chain is Isoleucine--tRNA ligase, found in Vibrio atlanticus (strain LGP32) (Vibrio splendidus (strain Mel32)).